The chain runs to 255 residues: uncharacterized protein (255 aa).

It belongs to the methyltransferase superfamily.

This is an uncharacterized protein from Mycolicibacterium gilvum (strain PYR-GCK) (Mycobacterium gilvum (strain PYR-GCK)).